The chain runs to 285 residues: mRNA decay factor CTH2 (285 aa).

The interval 37–55 is required for mRNA decay activity; that stretch reads INIRELEEYYNKTILNEDN. A disordered region spans residues 132 to 164; the sequence is LQQLSQQKPKNDASFSSEKESSAQPKVKSQVQE. Positions 153-164 are enriched in polar residues; sequence SAQPKVKSQVQE. 2 consecutive C3H1-type zinc fingers follow at residues 169–197 and 207–235; these read LYKT…HGLG and NFRT…HGDD. Positions 252-271 are disordered; sequence STSKQSDEKRSNGRGSAKKK.

As to quaternary structure, interacts with DHH1.

The protein localises to the nucleus. It is found in the cytoplasm. It localises to the P-body. Functionally, binds to specific AU-rich elements (ARE) in the 3'-untranslated region of target mRNAs and promotes their degradation. In response to iron deficiency, promotes the decay of many mRNAs encoding proteins involved in iron-dependent pathways. Recruits the DHH1 helicase to the SDH4 mRNA and promotes SDH4 mRNA decay. Also destabilizes target mRNA by modulating 3'-end processing, creating extended transcripts that are prone for degradation. The sequence is that of mRNA decay factor CTH2 (TIS11) from Saccharomyces cerevisiae (strain ATCC 204508 / S288c) (Baker's yeast).